The following is a 213-amino-acid chain: MISITPEILVRAYASGVFPMARAHDDPQLYWIDPDERGVLPLDGLHVSRSLRKVLRHCPFTVTIDTVFVEVLKQCAAPVPGRDETWINAEIEHLFTDLFDLGLGHSVECWQGDQLVGGLYGLAMGGVFFGESMFSRVDNASKVALCHLVARLKRGGFRLLDTQFTTNHLRSMGAVEIARPLYHARLGNALQVMGDFTVDVPDVLAALDTPSGY.

Belongs to the L/F-transferase family.

It is found in the cytoplasm. It catalyses the reaction N-terminal L-lysyl-[protein] + L-leucyl-tRNA(Leu) = N-terminal L-leucyl-L-lysyl-[protein] + tRNA(Leu) + H(+). The catalysed reaction is N-terminal L-arginyl-[protein] + L-leucyl-tRNA(Leu) = N-terminal L-leucyl-L-arginyl-[protein] + tRNA(Leu) + H(+). It carries out the reaction L-phenylalanyl-tRNA(Phe) + an N-terminal L-alpha-aminoacyl-[protein] = an N-terminal L-phenylalanyl-L-alpha-aminoacyl-[protein] + tRNA(Phe). Its function is as follows. Functions in the N-end rule pathway of protein degradation where it conjugates Leu, Phe and, less efficiently, Met from aminoacyl-tRNAs to the N-termini of proteins containing an N-terminal arginine or lysine. The polypeptide is Leucyl/phenylalanyl-tRNA--protein transferase (Rhodospirillum rubrum (strain ATCC 11170 / ATH 1.1.1 / DSM 467 / LMG 4362 / NCIMB 8255 / S1)).